The primary structure comprises 433 residues: 4-hydroxy-3-methylbut-2-en-1-yl diphosphate synthase (flavodoxin) (433 aa).

Residues M1 to P10 are compositionally biased toward polar residues. Positions M1–R24 are disordered. [4Fe-4S] cluster is bound by residues C320, C323, C366, and E373.

Belongs to the IspG family. It depends on [4Fe-4S] cluster as a cofactor.

It carries out the reaction (2E)-4-hydroxy-3-methylbut-2-enyl diphosphate + oxidized [flavodoxin] + H2O + 2 H(+) = 2-C-methyl-D-erythritol 2,4-cyclic diphosphate + reduced [flavodoxin]. It participates in isoprenoid biosynthesis; isopentenyl diphosphate biosynthesis via DXP pathway; isopentenyl diphosphate from 1-deoxy-D-xylulose 5-phosphate: step 5/6. Converts 2C-methyl-D-erythritol 2,4-cyclodiphosphate (ME-2,4cPP) into 1-hydroxy-2-methyl-2-(E)-butenyl 4-diphosphate. The polypeptide is 4-hydroxy-3-methylbut-2-en-1-yl diphosphate synthase (flavodoxin) (Bordetella bronchiseptica (strain ATCC BAA-588 / NCTC 13252 / RB50) (Alcaligenes bronchisepticus)).